A 560-amino-acid chain; its full sequence is DNA ligase B (560 aa).

The active-site N6-AMP-lysine intermediate is lysine 124.

This sequence belongs to the NAD-dependent DNA ligase family. LigB subfamily.

The catalysed reaction is NAD(+) + (deoxyribonucleotide)n-3'-hydroxyl + 5'-phospho-(deoxyribonucleotide)m = (deoxyribonucleotide)n+m + AMP + beta-nicotinamide D-nucleotide.. Catalyzes the formation of phosphodiester linkages between 5'-phosphoryl and 3'-hydroxyl groups in double-stranded DNA using NAD as a coenzyme and as the energy source for the reaction. In Shigella flexneri serotype 5b (strain 8401), this protein is DNA ligase B.